The primary structure comprises 375 residues: 4,4'-diaponeurosporenoate glycosyltransferase (375 aa).

A run of 4 helical transmembrane segments spans residues 3–23 (WLSR…ALIF), 164–184 (FYEG…NVFS), 277–297 (IMTA…GLCL), and 330–350 (FSNL…KIFI).

This sequence belongs to the glycosyltransferase 2 family. CrtQ subfamily.

It localises to the cell membrane. The protein operates within carotenoid biosynthesis; staphyloxanthin biosynthesis; staphyloxanthin from farnesyl diphosphate: step 4/5. Functionally, catalyzes the glycosylation of 4,4'-diaponeurosporenoate, i.e. the esterification of glucose at the C1'' position with the carboxyl group of 4,4'-diaponeurosporenic acid, to form glycosyl-4,4'-diaponeurosporenoate. This is a step in the biosynthesis of staphyloxanthin, an orange pigment present in most staphylococci strains. This chain is 4,4'-diaponeurosporenoate glycosyltransferase (crtQ), found in Staphylococcus aureus (strain Mu50 / ATCC 700699).